Here is a 542-residue protein sequence, read N- to C-terminus: Putative cysteine ligase BshC (542 aa).

The stretch at 458–487 forms a coiled coil; the sequence is VAKNAAILQAQIEFLQHALERALLRKHETE.

It belongs to the BshC family.

In terms of biological role, involved in bacillithiol (BSH) biosynthesis. May catalyze the last step of the pathway, the addition of cysteine to glucosamine malate (GlcN-Mal) to generate BSH. This Geobacillus kaustophilus (strain HTA426) protein is Putative cysteine ligase BshC.